The following is a 707-amino-acid chain: NAD(P)H-quinone oxidoreductase subunit 5, chloroplastic (707 aa).

Transmembrane regions (helical) follow at residues 9-29, 40-60, 89-109, 125-145, 147-167, 184-204, 219-239, 258-278, 280-300, 327-347, 354-374, 396-416, 425-445, 538-558, and 592-612; these read WIIP…LLLF, WAFP…DLSI, IDSL…FVLI, FAYM…SNLI, IYIF…FWFT, IGDF…GSFE, NEVH…GAVA, TPIS…FLVA, LLPL…IGII, LGYM…FHLI, ALLF…VGYS, IAFL…CFWS, WLYS…TAFY, LFPM…AIPL, and FLTN…TAFL.

This sequence belongs to the complex I subunit 5 family. NDH is composed of at least 16 different subunits, 5 of which are encoded in the nucleus.

Its subcellular location is the plastid. The protein resides in the chloroplast thylakoid membrane. It catalyses the reaction a plastoquinone + NADH + (n+1) H(+)(in) = a plastoquinol + NAD(+) + n H(+)(out). The enzyme catalyses a plastoquinone + NADPH + (n+1) H(+)(in) = a plastoquinol + NADP(+) + n H(+)(out). NDH shuttles electrons from NAD(P)H:plastoquinone, via FMN and iron-sulfur (Fe-S) centers, to quinones in the photosynthetic chain and possibly in a chloroplast respiratory chain. The immediate electron acceptor for the enzyme in this species is believed to be plastoquinone. Couples the redox reaction to proton translocation, and thus conserves the redox energy in a proton gradient. This is NAD(P)H-quinone oxidoreductase subunit 5, chloroplastic (ndhF) from Malvaviscus arboreus (Turk's cap).